A 328-amino-acid polypeptide reads, in one-letter code: L-lactate dehydrogenase (328 aa).

NAD(+) contacts are provided by residues V18, E39, K46, Y71, and 85 to 86; that span reads GA. The substrate site is built by Q88 and R94. NAD(+)-binding positions include S107, 124 to 126, and S149; that span reads AAN. 126 to 129 contributes to the substrate binding site; it reads NPVD. 154–157 contacts substrate; the sequence is DSAR. The beta-D-fructose 1,6-bisphosphate site is built by R159 and H174. H181 serves as the catalytic Proton acceptor. A Phosphotyrosine modification is found at Y226. T235 contacts substrate.

It belongs to the LDH/MDH superfamily. LDH family. As to quaternary structure, homotetramer.

It is found in the cytoplasm. It carries out the reaction (S)-lactate + NAD(+) = pyruvate + NADH + H(+). Its pathway is fermentation; pyruvate fermentation to lactate; (S)-lactate from pyruvate: step 1/1. Allosterically activated by fructose 1,6-bisphosphate (FBP). Its function is as follows. Catalyzes the conversion of lactate to pyruvate. This chain is L-lactate dehydrogenase, found in Streptococcus gordonii (strain Challis / ATCC 35105 / BCRC 15272 / CH1 / DL1 / V288).